The chain runs to 211 residues: Ubiquitin-conjugating enzyme E2 S-B (211 aa).

The region spanning 11 to 157 (HIIRRVYKEV…ARLMTDIHAQ (147 aa)) is the UBC core domain. C95 serves as the catalytic Glycyl thioester intermediate. The interval 158 to 211 (GTSLRGKDPTDPCSSASTPVVSGDGPMAKKHAGDRDKKLAAKKKTDKKRALRRL) is disordered. A compositionally biased stretch (basic residues) spans 197-211 (AAKKKTDKKRALRRL).

This sequence belongs to the ubiquitin-conjugating enzyme family.

It catalyses the reaction S-ubiquitinyl-[E1 ubiquitin-activating enzyme]-L-cysteine + [E2 ubiquitin-conjugating enzyme]-L-cysteine = [E1 ubiquitin-activating enzyme]-L-cysteine + S-ubiquitinyl-[E2 ubiquitin-conjugating enzyme]-L-cysteine.. The protein operates within protein modification; protein ubiquitination. In terms of biological role, catalyzes the covalent attachment of ubiquitin to other proteins. Acts as an essential factor of the anaphase promoting complex/cyclosome (APC/C), a cell cycle-regulated ubiquitin ligase that controls progression through mitosis. Acts by specifically elongating 'Lys-11'-linked polyubiquitin chains initiated by the E2 enzyme ube2c/ubch10 on APC/C substrates, enhancing the degradation of APC/C substrates by the proteasome and promoting mitotic exit. The sequence is that of Ubiquitin-conjugating enzyme E2 S-B (ube2s-b) from Xenopus laevis (African clawed frog).